The following is a 182-amino-acid chain: MFKRSIIQQSRLFSNSASRLGKKVFFDPAVNGTKIGRIEFELYDNVVPKTAENFRALCTGEKGWGYKGVPFHRIIPDFMIQGGDTDLTNGFGGKSIYGSKFADENFVKKHDKAGLLSMANAGPNTNGSQFFITTVPCPWLDGKHVVFGEVTKGMDIVKAIESYGTASGKPRAEIVIEEAGEL.

The N-terminal 20 residues, 1–20 (MFKRSIIQQSRLFSNSASRL), are a transit peptide targeting the mitochondrion. In terms of domain architecture, PPIase cyclophilin-type spans 25–181 (FFDPAVNGTK…AEIVIEEAGE (157 aa)).

This sequence belongs to the cyclophilin-type PPIase family.

Its subcellular location is the mitochondrion matrix. The catalysed reaction is [protein]-peptidylproline (omega=180) = [protein]-peptidylproline (omega=0). Its activity is regulated as follows. Inhibited by the immunosuppressant drug cyclosporin A and by SDZ NIM811, a PPIase inhibitor. PPIases accelerate the folding of proteins. It catalyzes the cis-trans isomerization of proline imidic peptide bonds in oligopeptides. This isozyme is required for growth on lactate at high temperature. The polypeptide is Peptidyl-prolyl cis-trans isomerase C, mitochondrial (CPR3) (Saccharomyces cerevisiae (strain ATCC 204508 / S288c) (Baker's yeast)).